The primary structure comprises 887 residues: Translation initiation factor IF-2 (887 aa).

A disordered region spans residues 1 to 259 (MSDEQDQGET…KVGDDRRRGA (259 aa)). The segment covering 62–94 (GRPSAPSRASGGAAAPRGLTAAEQAARQRAVVE) has biased composition (low complexity). Basic and acidic residues-rich tracts occupy residues 95-111 (QQREAARLEAERREQEK) and 119-158 (EEARRKAEEEARAAEEAERLRAEEEARRREEEEAERRRAA). Over residues 159-210 (EASQATAAPPAPAAAASPRAAMPAPTAAPARPGAAPARRTAPVPPATSASET) the composition is skewed to low complexity. The span at 250–259 (KVGDDRRRGA) shows a compositional bias: basic and acidic residues. The 171-residue stretch at 386-556 (VRPPVVTIMG…LLQAELLDLK (171 aa)) folds into the tr-type G domain. The tract at residues 395-402 (GHVDHGKT) is G1. 395–402 (GHVDHGKT) lines the GTP pocket. The segment at 420–424 (GITQH) is G2. The G3 stretch occupies residues 442–445 (DTPG). GTP is bound by residues 442–446 (DTPGH) and 496–499 (NKID). Residues 496 to 499 (NKID) form a G4 region. Residues 532–534 (SAL) form a G5 region.

Belongs to the TRAFAC class translation factor GTPase superfamily. Classic translation factor GTPase family. IF-2 subfamily.

The protein resides in the cytoplasm. Functionally, one of the essential components for the initiation of protein synthesis. Protects formylmethionyl-tRNA from spontaneous hydrolysis and promotes its binding to the 30S ribosomal subunits. Also involved in the hydrolysis of GTP during the formation of the 70S ribosomal complex. This chain is Translation initiation factor IF-2, found in Acidiphilium cryptum (strain JF-5).